Here is a 480-residue protein sequence, read N- to C-terminus: Probable histone deacetylase 1-B (480 aa).

Positions 10-321 are histone deacetylase; that stretch reads KVCYYYDGDV…WTYETAVALD (312 aa). The active site involves His141. The segment at 387–480 is disordered; that stretch reads DSVHDDSGEE…KRVKEETKSV (94 aa). Over residues 401-416 the composition is skewed to basic and acidic residues; that stretch reads PDKRISIRSSDKRIAC. Over residues 417 to 427 the composition is skewed to acidic residues; it reads DEEFSDSEDEG. A compositionally biased stretch (basic and acidic residues) spans 443–480; that stretch reads VKTEEEKEGEDKKDVKEEEKAKDEKTDSKRVKEETKSV.

This sequence belongs to the histone deacetylase family. HD type 1 subfamily. In terms of assembly, found in a large complex with RBBP4 and MI-2.

The protein localises to the nucleus. It localises to the cytoplasm. The enzyme catalyses N(6)-acetyl-L-lysyl-[histone] + H2O = L-lysyl-[histone] + acetate. It catalyses the reaction N(6)-acetyl-L-lysyl-[protein] + H2O = L-lysyl-[protein] + acetate. The catalysed reaction is N(6)-(2E)-butenoyl-L-lysyl-[protein] + H2O = (2E)-2-butenoate + L-lysyl-[protein]. Its function is as follows. Histone deacetylase that catalyzes the deacetylation of lysine residues on the N-terminal part of the core histones (H2A, H2B, H3 and H4). Histone deacetylation gives a tag for epigenetic repression and plays an important role in transcriptional regulation, cell cycle progression and developmental events. Histone deacetylases act via the formation of large multiprotein complexes. Also functions as a deacetylase for non-histone proteins. In addition to protein deacetylase activity, also has protein-lysine deacylase activity: acts as a protein decrotonylase by mediating decrotonylation ((2E)-butenoyl) of histones. The polypeptide is Probable histone deacetylase 1-B (hdac1-b) (Xenopus laevis (African clawed frog)).